The following is a 750-amino-acid chain: Photosystem I P700 chlorophyll a apoprotein A1 (750 aa).

A run of 8 helical transmembrane segments spans residues 70 to 93 (IFSA…FHGA), 156 to 179 (LYCT…FHYH), 195 to 219 (LNHH…HVSL), 291 to 309 (IAHH…GHMY), 346 to 369 (WHAQ…HHMY), 385 to 411 (LSLF…IFMV), 433 to 455 (AIIS…LYIH), and 531 to 549 (FLVH…LILL). Positions 573 and 582 each coordinate [4Fe-4S] cluster. 2 helical membrane passes run 589-610 (HVFL…HFSW) and 664-686 (LSAY…MFLF). A chlorophyll a'-binding site is contributed by H675. M683 and Y691 together coordinate chlorophyll a. A phylloquinone-binding site is contributed by W692. The helical transmembrane segment at 724–744 (AVGVTHYLLGGIATTWAFFLA) threads the bilayer.

This sequence belongs to the PsaA/PsaB family. The PsaA/B heterodimer binds the P700 chlorophyll special pair and subsequent electron acceptors. PSI consists of a core antenna complex that captures photons, and an electron transfer chain that converts photonic excitation into a charge separation. The eukaryotic PSI reaction center is composed of at least 11 subunits. It depends on P700 is a chlorophyll a/chlorophyll a' dimer, A0 is one or more chlorophyll a, A1 is one or both phylloquinones and FX is a shared 4Fe-4S iron-sulfur center. as a cofactor.

It is found in the plastid. It localises to the chloroplast thylakoid membrane. It carries out the reaction reduced [plastocyanin] + hnu + oxidized [2Fe-2S]-[ferredoxin] = oxidized [plastocyanin] + reduced [2Fe-2S]-[ferredoxin]. Functionally, psaA and PsaB bind P700, the primary electron donor of photosystem I (PSI), as well as the electron acceptors A0, A1 and FX. PSI is a plastocyanin-ferredoxin oxidoreductase, converting photonic excitation into a charge separation, which transfers an electron from the donor P700 chlorophyll pair to the spectroscopically characterized acceptors A0, A1, FX, FA and FB in turn. Oxidized P700 is reduced on the lumenal side of the thylakoid membrane by plastocyanin. The protein is Photosystem I P700 chlorophyll a apoprotein A1 of Lotus japonicus (Lotus corniculatus var. japonicus).